The following is a 126-amino-acid chain: Fluoride-specific ion channel FluC (126 aa).

4 consecutive transmembrane segments (helical) span residues 5-25 (VLAVSVGAVIGANLRWGLGLW), 35-55 (WGTLVANLSGGWLIGVLMAFF), 68-88 (FAVTGLCGALTTFSTFSLEMF), and 99-119 (ALVGILAHVVGSILMTALGFL). Positions 75 and 78 each coordinate Na(+).

It belongs to the fluoride channel Fluc/FEX (TC 1.A.43) family.

The protein resides in the cell inner membrane. It carries out the reaction fluoride(in) = fluoride(out). With respect to regulation, na(+) is not transported, but it plays an essential structural role and its presence is essential for fluoride channel function. Its function is as follows. Fluoride-specific ion channel. Important for reducing fluoride concentration in the cell, thus reducing its toxicity. In Marinobacter nauticus (strain ATCC 700491 / DSM 11845 / VT8) (Marinobacter aquaeolei), this protein is Fluoride-specific ion channel FluC.